The sequence spans 281 residues: GDT1-like protein 4 (281 aa).

Residues 1-22 (MARRVSTTRLLLLLLLVAAAAA) form the signal peptide. 6 consecutive transmembrane segments (helical) span residues 66–86 (AGLG…VSEI), 105–125 (TVLS…TGLG), 137–157 (TNSA…YIAW), 188–208 (IFSR…FLAE), 226–246 (AVGV…FAVV), and 258–278 (GTVA…SYFY).

Belongs to the GDT1 family.

The protein localises to the membrane. This chain is GDT1-like protein 4, found in Oryza sativa subsp. indica (Rice).